A 198-amino-acid chain; its full sequence is Na(+)-translocating NADH-quinone reductase subunit E (198 aa).

A run of 6 helical transmembrane segments spans residues 11-31 (SIFI…FLAV), 39-59 (FGLG…NNLV), 77-97 (FLNF…LEMI), 110-130 (GIFL…SFMV), 140-160 (VVYG…LAGI), and 176-196 (LGIT…FSGV).

It belongs to the NqrDE/RnfAE family. As to quaternary structure, composed of six subunits; NqrA, NqrB, NqrC, NqrD, NqrE and NqrF.

The protein localises to the cell inner membrane. It carries out the reaction a ubiquinone + n Na(+)(in) + NADH + H(+) = a ubiquinol + n Na(+)(out) + NAD(+). Functionally, NQR complex catalyzes the reduction of ubiquinone-1 to ubiquinol by two successive reactions, coupled with the transport of Na(+) ions from the cytoplasm to the periplasm. NqrA to NqrE are probably involved in the second step, the conversion of ubisemiquinone to ubiquinol. The chain is Na(+)-translocating NADH-quinone reductase subunit E from Vibrio vulnificus (strain CMCP6).